We begin with the raw amino-acid sequence, 622 residues long: Low affinity potassium transport system protein Kup (622 aa).

12 consecutive transmembrane segments (helical) span residues 9 to 29 (LSAI…TSPL), 49 to 69 (VFGF…IKYL), 103 to 123 (VIMG…TPAI), 137 to 157 (PELD…LFMI), 165 to 185 (VGKL…GLGL), 213 to 233 (VSFI…ALYA), 247 to 267 (WFSV…ALLL), 276 to 296 (PFFL…AALA), 337 to 357 (IYIP…IVSF), 363 to 383 (LAAA…ILST), 396 to 416 (FVAL…SANL), and 419 to 439 (LLSG…IMTT).

It belongs to the HAK/KUP transporter (TC 2.A.72) family.

The protein localises to the cell inner membrane. It catalyses the reaction K(+)(in) + H(+)(in) = K(+)(out) + H(+)(out). In terms of biological role, responsible for the low-affinity transport of potassium into the cell. Likely operates as a K(+):H(+) symporter. This chain is Low affinity potassium transport system protein Kup, found in Citrobacter koseri (strain ATCC BAA-895 / CDC 4225-83 / SGSC4696).